The following is a 382-amino-acid chain: KCRIIREFPDIVFKGLTLVQVSQKFGKAGFEDVKKVTEEIVHLNEDCCKGDAVECMMERMEATDHICEAKDKLSSKLADCCAKSILERTPCLLALPNDESDLSKELKNYYEDERVCENYKKDKLLFLAHFTHDYARSHQESSPQSCLRVSKGFEGLLEKCCASENHAECLKQAPILLEAALKEIEELRKQNCGALQLLGFRDYNIQLLFRYFFKMPQVTAPTLVELAGRMTKVAVYCCGLAENKQQTCAEEKLDILLGEMCEKEKHTFVNDNVRHCCVDSYANRRKCFTDLQRYPNYVAPKWDESKLHFNEDLCKGSEDDQIKKKLEVLVEYMKMKPDCGPEKLKEVVEAFRKIDIKCCAAEDHQKCFDDEKAGLLQIIEAH.

2 Albumin domains span residues 1–178 and 179–377; these read KCRI…ILLE and AALK…GLLQ. 12 cysteine pairs are disulfide-bonded: cysteine 2/cysteine 48, cysteine 47/cysteine 55, cysteine 67/cysteine 81, cysteine 80/cysteine 91, cysteine 116/cysteine 161, cysteine 160/cysteine 169, cysteine 192/cysteine 238, cysteine 237/cysteine 248, cysteine 261/cysteine 277, cysteine 276/cysteine 287, cysteine 314/cysteine 359, and cysteine 358/cysteine 367. Aspartate 51 and glutamate 54 together coordinate Ca(2+). A Zn(2+)-binding site is contributed by aspartate 51.

Belongs to the ALB/AFP/VDB family. Plasma.

The protein resides in the secreted. Serum albumin, the main protein of plasma, has a good binding capacity for water, Ca(2+), Na(+), K(+), fatty acids, hormones, bilirubin and drugs. Its main function is the regulation of the colloidal osmotic pressure of blood. The polypeptide is Albumin (ALB) (Aquarana catesbeiana (American bullfrog)).